The chain runs to 351 residues: DNA beta-glucosyltransferase (351 aa).

As to quaternary structure, monomer.

It catalyses the reaction Transfers a beta-D-glucosyl residue from UDP-alpha-D-glucose to a hydroxymethylcytosine residue in DNA.. Its pathway is genetic information processing; DNA modification. Functionally, catalyzes the transfer of glucose from uridine diphosphoglucose to 5-hydroxymethyl cytosine of T4 DNA to yield glucosyl 5-hydroxymethyl cytosine (glc-HMC). This DNA process seems to occur immediately after DNA synthesis since the DNA alpha-glucosyltransferase interacts with the clamp protein gp45. The glc-HMC modification protects the phage genome against its own nucleases and the host restriction endonuclease system. The glc-HMC modification also protects against the host CRISPR-Cas9 defense system. The polypeptide is DNA beta-glucosyltransferase (bgt) (Enterobacteria phage T4 (Bacteriophage T4)).